A 469-amino-acid chain; its full sequence is Glutamate--tRNA ligase (469 aa).

The 'HIGH' region signature appears at 9 to 19 (PSPTGYLHVGG). Zn(2+) is bound by residues cysteine 98, cysteine 100, cysteine 125, and aspartate 127. Positions 237-241 (KLSKR) match the 'KMSKS' region motif. An ATP-binding site is contributed by lysine 240.

The protein belongs to the class-I aminoacyl-tRNA synthetase family. Glutamate--tRNA ligase type 1 subfamily. In terms of assembly, monomer. Zn(2+) serves as cofactor.

The protein resides in the cytoplasm. The enzyme catalyses tRNA(Glu) + L-glutamate + ATP = L-glutamyl-tRNA(Glu) + AMP + diphosphate. Its function is as follows. Catalyzes the attachment of glutamate to tRNA(Glu) in a two-step reaction: glutamate is first activated by ATP to form Glu-AMP and then transferred to the acceptor end of tRNA(Glu). This Erwinia tasmaniensis (strain DSM 17950 / CFBP 7177 / CIP 109463 / NCPPB 4357 / Et1/99) protein is Glutamate--tRNA ligase.